Here is a 603-residue protein sequence, read N- to C-terminus: MQTTVTTMLLASVALAACAGGGSTPLPLPQQQPPQQEPPPPPVPLASRAACEALKDGNGDMVWPNAATVVEVAAWRDAAPATASAAALPEHCEVSGAIAKRTGIDGYPYEIKFRLRMPAEWNGRFFMEGGSGTNGSLSAATGSIGGGQIASALSRNFATIATDGGHDNAVNDNPDALGTVAFGLDPQARLDMGYNSYDQVTQAGKAAVARFYGRAADKSYFIGCSEGGREGMMLSQRFPSHYDGIVAGAPGYQLPKAGISGAWTTQSLAPAAVGLDAQGVPLINKSFSDADLHLLSQAILGTCDALDGLADGIVDNYRACQAAFDPATAANPANGQALQCVGAKTADCLSPVQVTAIKRAMAGPVNSAGTPLYNRWAWDAGMSGLSGTTYNQGWRSWWLGSFNSSANNAQRVSGFSARSWLVDFATPPEPMPMTQVAARMMKFDFDIDPLKIWATSGQFTQSSMDWHGATSTDLAAFRDRGGKMILYHGMSDAAFSALDTADYYERLGAAMPGAAGFARLFLVPGMNHCSGGPGTDRFDMLTPLVAWVERGEAPDQISAWSGTPGYFGVAARTRPLCPYPQIARYKGSGDINTEANFACAAPP.

The first 17 residues, 1–17 (MQTTVTTMLLASVALAA), serve as a signal peptide directing secretion. The N-palmitoyl cysteine moiety is linked to residue Cys-18. Cys-18 carries the S-diacylglycerol cysteine lipid modification. Positions 24–44 (TPLPLPQQQPPQQEPPPPPVP) are disordered. Positions 26–44 (LPLPQQQPPQQEPPPPPVP) are enriched in pro residues. Cys-51 and Cys-92 are oxidised to a cystine. Position 132 (Gly-132) interacts with 4-[(2-hydroxyethoxy)carbonyl]benzoate. Intrachain disulfides connect Cys-224–Cys-529, Cys-303–Cys-320, Cys-340–Cys-348, and Cys-577–Cys-599. Residue Ser-225 is the Acyl-ester intermediate of the active site. Glu-226 is a binding site for 4-[(2-hydroxyethoxy)carbonyl]benzoate. Asp-304, Asp-307, Leu-309, Asp-311, and Ile-313 together coordinate Ca(2+). Positions 411 and 416 each coordinate 4-[(2-hydroxyethoxy)carbonyl]benzoate. Active-site charge relay system residues include Asp-492 and His-528. His-528 serves as a coordination point for 4-[(2-hydroxyethoxy)carbonyl]benzoate.

Belongs to the tannase family.

It is found in the cell outer membrane. It catalyses the reaction 4-[(2-hydroxyethoxy)carbonyl]benzoate + H2O = terephthalate + ethylene glycol + H(+). Functionally, involved in the degradation and assimilation of the plastic poly(ethylene terephthalate) (PET), which allows I.sakaiensis to use PET as its major energy and carbon source for growth. Likely acts synergistically with PETase to depolymerize PET. Catalyzes the hydrolysis of mono(2-hydroxyethyl) terephthalate (MHET) into its two environmentally benign monomers, terephthalate and ethylene glycol. Does not show activity against PET, bis(hydroxyethyl) terephthalate (BHET), pNP-aliphatic esters or typical aromatic ester compounds catalyzed by the tannase family enzymes, such as ethyl gallate and ethyl ferulate. In Piscinibacter sakaiensis (Ideonella sakaiensis), this protein is Mono(2-hydroxyethyl) terephthalate hydrolase.